The primary structure comprises 380 residues: WAT1-related protein At2g37460 (380 aa).

10 consecutive transmembrane segments (helical) span residues 16-36, 45-65, 71-91, 107-127, 142-162, 187-207, 216-236, 254-274, 282-302, and 306-326; these read FISM…SKAV, VLVV…AFYF, PKMT…EPVI, FATA…YIFG, VVGT…KGPV, GAVL…LQAI, LSLT…VALV, LTAT…GGVV, FVTA…TIIF, and MYLG…LVIW. In terms of domain architecture, EamA 1 spans 27 to 134; the sequence is AGMDILSKAV…IFGLERVKLR (108 aa). One can recognise an EamA 2 domain in the interval 196-325; it reads FSYACFMILQ…VICAGLYLVI (130 aa).

It belongs to the drug/metabolite transporter (DMT) superfamily. Plant drug/metabolite exporter (P-DME) (TC 2.A.7.4) family.

The protein resides in the membrane. This chain is WAT1-related protein At2g37460, found in Arabidopsis thaliana (Mouse-ear cress).